The chain runs to 826 residues: DNA mismatch repair protein MutS (826 aa).

Residue 622–629 (GPNMAGKS) participates in ATP binding.

Belongs to the DNA mismatch repair MutS family.

This protein is involved in the repair of mismatches in DNA. It is possible that it carries out the mismatch recognition step. This protein has a weak ATPase activity. This chain is DNA mismatch repair protein MutS, found in Chlamydia abortus (strain DSM 27085 / S26/3) (Chlamydophila abortus).